Consider the following 231-residue polypeptide: Phosphatidylserine decarboxylase proenzyme (231 aa).

The active-site Schiff-base intermediate with substrate; via pyruvic acid is serine 188. Residue serine 188 is modified to Pyruvic acid (Ser); by autocatalysis.

Belongs to the phosphatidylserine decarboxylase family. PSD-A subfamily. In terms of assembly, heterodimer of a large membrane-associated beta subunit and a small pyruvoyl-containing alpha subunit. Requires pyruvate as cofactor. In terms of processing, is synthesized initially as an inactive proenzyme. Formation of the active enzyme involves a self-maturation process in which the active site pyruvoyl group is generated from an internal serine residue via an autocatalytic post-translational modification. Two non-identical subunits are generated from the proenzyme in this reaction, and the pyruvate is formed at the N-terminus of the alpha chain, which is derived from the carboxyl end of the proenzyme. The post-translation cleavage follows an unusual pathway, termed non-hydrolytic serinolysis, in which the side chain hydroxyl group of the serine supplies its oxygen atom to form the C-terminus of the beta chain, while the remainder of the serine residue undergoes an oxidative deamination to produce ammonia and the pyruvoyl prosthetic group on the alpha chain.

The protein resides in the cell membrane. It catalyses the reaction a 1,2-diacyl-sn-glycero-3-phospho-L-serine + H(+) = a 1,2-diacyl-sn-glycero-3-phosphoethanolamine + CO2. Its pathway is phospholipid metabolism; phosphatidylethanolamine biosynthesis; phosphatidylethanolamine from CDP-diacylglycerol: step 2/2. Catalyzes the formation of phosphatidylethanolamine (PtdEtn) from phosphatidylserine (PtdSer). In Rickettsia africae (strain ESF-5), this protein is Phosphatidylserine decarboxylase proenzyme.